A 37-amino-acid polypeptide reads, in one-letter code: Large ribosomal subunit protein bL36 (37 aa).

The protein belongs to the bacterial ribosomal protein bL36 family.

In Bifidobacterium adolescentis (strain ATCC 15703 / DSM 20083 / NCTC 11814 / E194a), this protein is Large ribosomal subunit protein bL36.